A 427-amino-acid polypeptide reads, in one-letter code: L-cysteine:1D-myo-inositol 2-amino-2-deoxy-alpha-D-glucopyranoside ligase (427 aa).

Position 46 (cysteine 46) interacts with Zn(2+). L-cysteinyl-5'-AMP is bound by residues 46–49 (CGIT), threonine 61, and 84–86 (NVT). A 'HIGH' region motif is present at residues 48–58 (ITPYDATHMGH). The 'ERGGDP' region signature appears at 186-191 (ERGGDP). Tryptophan 233 contributes to the L-cysteinyl-5'-AMP binding site. Residue cysteine 237 participates in Zn(2+) binding. Position 255–257 (255–257 (GSD)) interacts with L-cysteinyl-5'-AMP. Histidine 262 lines the Zn(2+) pocket. Position 289 (valine 289) interacts with L-cysteinyl-5'-AMP. Residues 295–299 (KMSKS) carry the 'KMSKS' region motif.

This sequence belongs to the class-I aminoacyl-tRNA synthetase family. MshC subfamily. As to quaternary structure, monomer. Requires Zn(2+) as cofactor.

It carries out the reaction 1D-myo-inositol 2-amino-2-deoxy-alpha-D-glucopyranoside + L-cysteine + ATP = 1D-myo-inositol 2-(L-cysteinylamino)-2-deoxy-alpha-D-glucopyranoside + AMP + diphosphate + H(+). Catalyzes the ATP-dependent condensation of GlcN-Ins and L-cysteine to form L-Cys-GlcN-Ins. This Catenulispora acidiphila (strain DSM 44928 / JCM 14897 / NBRC 102108 / NRRL B-24433 / ID139908) protein is L-cysteine:1D-myo-inositol 2-amino-2-deoxy-alpha-D-glucopyranoside ligase.